A 395-amino-acid chain; its full sequence is Acetyl-CoA acetyltransferase (395 aa).

The active-site Acyl-thioester intermediate is cysteine 90. Residues tyrosine 185 and lysine 230 each coordinate CoA. Tyrosine 185 is a K(+) binding site. Alanine 246, alanine 247, and alanine 249 together coordinate K(+). Serine 250 is a CoA binding site. Valine 347 contacts K(+). Catalysis depends on proton acceptor residues histidine 351 and cysteine 381.

It belongs to the thiolase-like superfamily. Thiolase family. In terms of assembly, homotetramer.

It is found in the cytoplasm. It carries out the reaction 2 acetyl-CoA = acetoacetyl-CoA + CoA. The protein operates within metabolic intermediate biosynthesis; (R)-mevalonate biosynthesis; (R)-mevalonate from acetyl-CoA: step 1/3. Its function is as follows. Acetyl-CoA acetyltransferase; part of the first module of ergosterol biosynthesis pathway that includes the early steps of the pathway, conserved across all eukaryotes, and which results in the formation of mevalonate from acetyl-coenzyme A (acetyl-CoA). Erg10 catalyzes the formation of acetoacetyl-CoA from acetyl-CoA. The first module starts with the action of the cytosolic acetyl-CoA acetyltransferase eg10 that catalyzes the formation of acetoacetyl-CoA. The hydroxymethylglutaryl-CoA synthases erg13 then condenses acetyl-CoA with acetoacetyl-CoA to form HMG-CoA. The rate-limiting step of the early module is the reduction to mevalonate by the 3-hydroxy-3-methylglutaryl-coenzyme A (HMG-CoA) reductases hcs1. This is Acetyl-CoA acetyltransferase (erg10) from Schizosaccharomyces pombe (strain 972 / ATCC 24843) (Fission yeast).